The following is a 261-amino-acid chain: Acyl-[acyl-carrier-protein]--UDP-N-acetylglucosamine O-acyltransferase (261 aa).

Belongs to the transferase hexapeptide repeat family. LpxA subfamily. As to quaternary structure, homotrimer.

The protein resides in the cytoplasm. It catalyses the reaction a (3R)-hydroxyacyl-[ACP] + UDP-N-acetyl-alpha-D-glucosamine = a UDP-3-O-[(3R)-3-hydroxyacyl]-N-acetyl-alpha-D-glucosamine + holo-[ACP]. Its pathway is glycolipid biosynthesis; lipid IV(A) biosynthesis; lipid IV(A) from (3R)-3-hydroxytetradecanoyl-[acyl-carrier-protein] and UDP-N-acetyl-alpha-D-glucosamine: step 1/6. Involved in the biosynthesis of lipid A, a phosphorylated glycolipid that anchors the lipopolysaccharide to the outer membrane of the cell. The protein is Acyl-[acyl-carrier-protein]--UDP-N-acetylglucosamine O-acyltransferase of Trichlorobacter lovleyi (strain ATCC BAA-1151 / DSM 17278 / SZ) (Geobacter lovleyi).